A 328-amino-acid chain; its full sequence is uncharacterized protein (328 aa).

Residues 1-25 (MKLFNFKKLSMLIAGFTLVTSPALA) form the signal peptide.

This sequence belongs to the bacterial solute-binding protein 7 family.

Its subcellular location is the periplasm. This is an uncharacterized protein from Haemophilus influenzae (strain ATCC 51907 / DSM 11121 / KW20 / Rd).